The chain runs to 201 residues: uncharacterized protein (201 aa).

This is an uncharacterized protein from Haemophilus influenzae (strain ATCC 51907 / DSM 11121 / KW20 / Rd).